We begin with the raw amino-acid sequence, 20 residues long: Superoxide dismutase [Fe] (20 aa).

It belongs to the iron/manganese superoxide dismutase family. As to quaternary structure, homodimer. It depends on Fe cation as a cofactor.

It localises to the periplasm. It catalyses the reaction 2 superoxide + 2 H(+) = H2O2 + O2. Destroys superoxide anion radicals which are normally produced within the cells and which are toxic to biological systems. The polypeptide is Superoxide dismutase [Fe] (sodB) (Photobacterium damsela subsp. piscicida (Pasteurella piscicida)).